A 549-amino-acid chain; its full sequence is Dihydroxy-acid dehydratase (549 aa).

Asp-78 serves as a coordination point for Mg(2+). [2Fe-2S] cluster is bound at residue Cys-119. Asp-120 and Lys-121 together coordinate Mg(2+). At Lys-121 the chain carries N6-carboxylysine. Residue Cys-191 coordinates [2Fe-2S] cluster. Glu-441 is a Mg(2+) binding site. Ser-466 acts as the Proton acceptor in catalysis.

This sequence belongs to the IlvD/Edd family. In terms of assembly, homodimer. It depends on [2Fe-2S] cluster as a cofactor. Mg(2+) serves as cofactor.

The enzyme catalyses (2R)-2,3-dihydroxy-3-methylbutanoate = 3-methyl-2-oxobutanoate + H2O. The catalysed reaction is (2R,3R)-2,3-dihydroxy-3-methylpentanoate = (S)-3-methyl-2-oxopentanoate + H2O. It functions in the pathway amino-acid biosynthesis; L-isoleucine biosynthesis; L-isoleucine from 2-oxobutanoate: step 3/4. It participates in amino-acid biosynthesis; L-valine biosynthesis; L-valine from pyruvate: step 3/4. Functionally, functions in the biosynthesis of branched-chain amino acids. Catalyzes the dehydration of (2R,3R)-2,3-dihydroxy-3-methylpentanoate (2,3-dihydroxy-3-methylvalerate) into 2-oxo-3-methylpentanoate (2-oxo-3-methylvalerate) and of (2R)-2,3-dihydroxy-3-methylbutanoate (2,3-dihydroxyisovalerate) into 2-oxo-3-methylbutanoate (2-oxoisovalerate), the penultimate precursor to L-isoleucine and L-valine, respectively. This Methanosphaera stadtmanae (strain ATCC 43021 / DSM 3091 / JCM 11832 / MCB-3) protein is Dihydroxy-acid dehydratase.